The chain runs to 201 residues: Acireductone dioxygenase 2 (201 aa).

The Fe(2+) site is built by His-83, His-85, Glu-89, and His-129. Ni(2+)-binding residues include His-83, His-85, Glu-89, and His-129.

It belongs to the acireductone dioxygenase (ARD) family. The cofactor is Fe(2+). Ni(2+) serves as cofactor.

The protein resides in the cytoplasm. Its subcellular location is the nucleus. It catalyses the reaction 1,2-dihydroxy-5-(methylsulfanyl)pent-1-en-3-one + O2 = 4-methylsulfanyl-2-oxobutanoate + formate + 2 H(+). The catalysed reaction is 1,2-dihydroxy-5-(methylsulfanyl)pent-1-en-3-one + O2 = 3-(methylsulfanyl)propanoate + CO + formate + 2 H(+). It participates in amino-acid biosynthesis; L-methionine biosynthesis via salvage pathway; L-methionine from S-methyl-5-thio-alpha-D-ribose 1-phosphate: step 5/6. Catalyzes 2 different reactions between oxygen and the acireductone 1,2-dihydroxy-3-keto-5-methylthiopentene (DHK-MTPene) depending upon the metal bound in the active site. Fe-containing acireductone dioxygenase (Fe-ARD) produces formate and 2-keto-4-methylthiobutyrate (KMTB), the alpha-ketoacid precursor of methionine in the methionine recycle pathway. Ni-containing acireductone dioxygenase (Ni-ARD) produces methylthiopropionate, carbon monoxide and formate, and does not lie on the methionine recycle pathway. This Coprinopsis cinerea (strain Okayama-7 / 130 / ATCC MYA-4618 / FGSC 9003) (Inky cap fungus) protein is Acireductone dioxygenase 2.